Here is an 884-residue protein sequence, read N- to C-terminus: Lon protease homolog 2, peroxisomal (884 aa).

In terms of domain architecture, Lon N-terminal spans 12–255; it reads LAILPFRNKV…KATELVDRHL (244 aa). A disordered region spans residues 67–101; the sequence is SLLSPGVGSDSGEGGSKAPGGSAGESTKQDTKNGK. A compositionally biased stretch (gly residues) spans 75-89; it reads SDSGEGGSKAPGGSA. 408-415 contacts ATP; it reads GPPGVGKT. Positions 689–874 constitute a Lon proteolytic domain; sequence VASPGVSVGL…EEVLDHAFEG (186 aa). Active-site residues include S780 and K823. The Microbody targeting signal motif lies at 882–884; sequence SKL.

It belongs to the peptidase S16 family. As to expression, expressed in roots, leaves and panicles.

The protein localises to the peroxisome matrix. The catalysed reaction is Hydrolysis of proteins in presence of ATP.. Functionally, ATP-dependent serine protease that mediates the selective degradation of misfolded and unassembled polypeptides in the peroxisomal matrix. Necessary for type 2 peroxisome targeting signal (PTS2)-containing protein processing and facilitates peroxisome matrix protein import. This chain is Lon protease homolog 2, peroxisomal (LON1), found in Oryza sativa subsp. indica (Rice).